The sequence spans 414 residues: Transposon Ty4-J Gag polyprotein (414 aa).

The stretch at 39–115 forms a coiled coil; that stretch reads RKVSIKDEQV…IQLLETNENN (77 aa). The disordered stretch occupies residues 378 to 414; sequence GAQRQQPLKSSAKRTKVLEQDTKKVEQSVQQQKTGNY. Residues 393-403 are compositionally biased toward basic and acidic residues; that stretch reads KVLEQDTKKVE. A compositionally biased stretch (polar residues) spans 404 to 414; that stretch reads QSVQQQKTGNY.

Functionally, capsid protein (CA) is the structural component of the virus-like particle (VLP), forming the shell that encapsulates the retrotransposons dimeric RNA genome. This is Transposon Ty4-J Gag polyprotein (TY4A-J) from Saccharomyces cerevisiae (strain ATCC 204508 / S288c) (Baker's yeast).